The primary structure comprises 162 residues: 2-C-methyl-D-erythritol 2,4-cyclodiphosphate synthase (162 aa).

The a divalent metal cation site is built by aspartate 10 and histidine 12. 4-CDP-2-C-methyl-D-erythritol 2-phosphate-binding positions include 10 to 12 and 36 to 37; these read DVH and HS. Histidine 44 is an a divalent metal cation binding site. Residues 58–60, 63–67, and arginine 144 contribute to the 4-CDP-2-C-methyl-D-erythritol 2-phosphate site; these read DIG and FPDTD.

The protein belongs to the IspF family. In terms of assembly, homotrimer. Requires a divalent metal cation as cofactor.

It carries out the reaction 4-CDP-2-C-methyl-D-erythritol 2-phosphate = 2-C-methyl-D-erythritol 2,4-cyclic diphosphate + CMP. Its pathway is isoprenoid biosynthesis; isopentenyl diphosphate biosynthesis via DXP pathway; isopentenyl diphosphate from 1-deoxy-D-xylulose 5-phosphate: step 4/6. Its function is as follows. Involved in the biosynthesis of isopentenyl diphosphate (IPP) and dimethylallyl diphosphate (DMAPP), two major building blocks of isoprenoid compounds. Catalyzes the conversion of 4-diphosphocytidyl-2-C-methyl-D-erythritol 2-phosphate (CDP-ME2P) to 2-C-methyl-D-erythritol 2,4-cyclodiphosphate (ME-CPP) with a corresponding release of cytidine 5-monophosphate (CMP). This is 2-C-methyl-D-erythritol 2,4-cyclodiphosphate synthase from Laribacter hongkongensis (strain HLHK9).